The sequence spans 156 residues: Small ribosomal subunit protein uS7 (156 aa).

It belongs to the universal ribosomal protein uS7 family. In terms of assembly, part of the 30S ribosomal subunit. Contacts proteins S9 and S11.

In terms of biological role, one of the primary rRNA binding proteins, it binds directly to 16S rRNA where it nucleates assembly of the head domain of the 30S subunit. Is located at the subunit interface close to the decoding center, probably blocks exit of the E-site tRNA. The protein is Small ribosomal subunit protein uS7 of Saccharophagus degradans (strain 2-40 / ATCC 43961 / DSM 17024).